Here is a 493-residue protein sequence, read N- to C-terminus: Glycerol kinase (493 aa).

T12 lines the ADP pocket. Positions 12, 13, and 14 each coordinate ATP. T12 provides a ligand contact to sn-glycerol 3-phosphate. R16 contacts ADP. The sn-glycerol 3-phosphate site is built by R82, E83, Y132, and D239. 5 residues coordinate glycerol: R82, E83, Y132, D239, and Q240. ADP is bound by residues T261 and G303. The ATP site is built by T261, G303, Q307, and G402. Positions 402 and 406 each coordinate ADP.

The protein belongs to the FGGY kinase family.

It catalyses the reaction glycerol + ATP = sn-glycerol 3-phosphate + ADP + H(+). It functions in the pathway polyol metabolism; glycerol degradation via glycerol kinase pathway; sn-glycerol 3-phosphate from glycerol: step 1/1. Key enzyme in the regulation of glycerol uptake and metabolism. Catalyzes the phosphorylation of glycerol to yield sn-glycerol 3-phosphate. The polypeptide is Glycerol kinase (Thermococcus onnurineus (strain NA1)).